The chain runs to 378 residues: Ribosomal RNA large subunit methyltransferase G (378 aa).

Belongs to the methyltransferase superfamily. RlmG family.

The protein localises to the cytoplasm. The catalysed reaction is guanosine(1835) in 23S rRNA + S-adenosyl-L-methionine = N(2)-methylguanosine(1835) in 23S rRNA + S-adenosyl-L-homocysteine + H(+). Specifically methylates the guanine in position 1835 (m2G1835) of 23S rRNA. The protein is Ribosomal RNA large subunit methyltransferase G of Shewanella putrefaciens (strain CN-32 / ATCC BAA-453).